Consider the following 70-residue polypeptide: DNA gyrase inhibitor YacG (70 aa).

Cys-20, Cys-23, Cys-35, and Cys-39 together coordinate Zn(2+).

The protein belongs to the DNA gyrase inhibitor YacG family. As to quaternary structure, interacts with GyrB. The cofactor is Zn(2+).

In terms of biological role, inhibits all the catalytic activities of DNA gyrase by preventing its interaction with DNA. Acts by binding directly to the C-terminal domain of GyrB, which probably disrupts DNA binding by the gyrase. This Rhizobium leguminosarum bv. trifolii (strain WSM2304) protein is DNA gyrase inhibitor YacG.